We begin with the raw amino-acid sequence, 613 residues long: Cleavage and polyadenylation specificity factor subunit 3-II (613 aa).

Positions 67 to 72 (HFHMDH) match the HXHXDH motif motif.

This sequence belongs to the metallo-beta-lactamase superfamily. RNA-metabolizing metallo-beta-lactamase-like family. INTS11 subfamily. Component of the CPSF complex, at least composed of CPSF160, CPSF100, CPSF73-I, CPSF73-II, CPSF30, FY and FIPS5. Interacts with CPSF30, CPSF100, CPSF160 and FY. In terms of tissue distribution, highly expressed in senescence leaves, petals, stamens, pollen and late stages of siliques with seeds. Also detected in roots, stems, leaves and seedlings.

It localises to the nucleus. Its function is as follows. Component of the cleavage and polyadenylation specificity factor (CPSF) complex that play a key role in pre-mRNA 3'-end formation, recognizing the AAUAAA signal sequence and interacting with poly(A) polymerase and other factors to bring about cleavage and poly(A) addition. May function as mRNA 3'-end-processing endonuclease and also be involved in the histone 3'-end pre-mRNA processing. The polypeptide is Cleavage and polyadenylation specificity factor subunit 3-II (CPSF73-II) (Arabidopsis thaliana (Mouse-ear cress)).